We begin with the raw amino-acid sequence, 318 residues long: Thymidylate synthase (318 aa).

DUMP-binding positions include Arg25 and 180-181 (RR). Cys200 functions as the Nucleophile in the catalytic mechanism. DUMP-binding positions include 220 to 223 (RSGD), Asn231, and 261 to 263 (HIY). Asp223 serves as a coordination point for (6R)-5,10-methylene-5,6,7,8-tetrahydrofolate. Ala317 is a (6R)-5,10-methylene-5,6,7,8-tetrahydrofolate binding site.

Belongs to the thymidylate synthase family. Bacterial-type ThyA subfamily. Homodimer.

Its subcellular location is the cytoplasm. It carries out the reaction dUMP + (6R)-5,10-methylene-5,6,7,8-tetrahydrofolate = 7,8-dihydrofolate + dTMP. Its pathway is pyrimidine metabolism; dTTP biosynthesis. Functionally, catalyzes the reductive methylation of 2'-deoxyuridine-5'-monophosphate (dUMP) to 2'-deoxythymidine-5'-monophosphate (dTMP) while utilizing 5,10-methylenetetrahydrofolate (mTHF) as the methyl donor and reductant in the reaction, yielding dihydrofolate (DHF) as a by-product. This enzymatic reaction provides an intracellular de novo source of dTMP, an essential precursor for DNA biosynthesis. This is Thymidylate synthase from Bacillus cereus (strain ATCC 10987 / NRS 248).